We begin with the raw amino-acid sequence, 248 residues long: Probable transcriptional regulatory protein Nwi_2729 (248 aa).

Residues methionine 1 to lysine 21 are disordered.

It belongs to the TACO1 family.

Its subcellular location is the cytoplasm. The chain is Probable transcriptional regulatory protein Nwi_2729 from Nitrobacter winogradskyi (strain ATCC 25391 / DSM 10237 / CIP 104748 / NCIMB 11846 / Nb-255).